The chain runs to 363 residues: NAD(P)H-quinone oxidoreductase subunit 1, chloroplastic (363 aa).

6 consecutive transmembrane segments (helical) span residues 27–47, 98–118, 127–147, 248–268, 300–320, and 336–356; these read IWLF…VLVI, FSIG…VIPF, LSIG…GLLM, YSGI…LVSS, VFGT…FLFI, and LLNL…LLTT.

It belongs to the complex I subunit 1 family. In terms of assembly, NDH is composed of at least 16 different subunits, 5 of which are encoded in the nucleus.

The protein localises to the plastid. The protein resides in the chloroplast thylakoid membrane. It carries out the reaction a plastoquinone + NADH + (n+1) H(+)(in) = a plastoquinol + NAD(+) + n H(+)(out). The enzyme catalyses a plastoquinone + NADPH + (n+1) H(+)(in) = a plastoquinol + NADP(+) + n H(+)(out). NDH shuttles electrons from NAD(P)H:plastoquinone, via FMN and iron-sulfur (Fe-S) centers, to quinones in the photosynthetic chain and possibly in a chloroplast respiratory chain. The immediate electron acceptor for the enzyme in this species is believed to be plastoquinone. Couples the redox reaction to proton translocation, and thus conserves the redox energy in a proton gradient. This chain is NAD(P)H-quinone oxidoreductase subunit 1, chloroplastic, found in Amborella trichopoda.